Consider the following 222-residue polypeptide: uncharacterized protein (222 aa).

This is an uncharacterized protein from Fowlpox virus (strain NVSL) (FPV).